The sequence spans 51 residues: Putative protein LomR (51 aa).

The protein belongs to the outer membrane OOP (TC 1.B.6) superfamily. Ail family.

This Escherichia coli (strain K12) protein is Putative protein LomR (lomR).